Here is a 266-residue protein sequence, read N- to C-terminus: GTP cyclohydrolase FolE2 1 (266 aa).

This sequence belongs to the GTP cyclohydrolase IV family.

The catalysed reaction is GTP + H2O = 7,8-dihydroneopterin 3'-triphosphate + formate + H(+). It functions in the pathway cofactor biosynthesis; 7,8-dihydroneopterin triphosphate biosynthesis; 7,8-dihydroneopterin triphosphate from GTP: step 1/1. Converts GTP to 7,8-dihydroneopterin triphosphate. In Dechloromonas aromatica (strain RCB), this protein is GTP cyclohydrolase FolE2 1.